A 556-amino-acid polypeptide reads, in one-letter code: Small ribosomal subunit protein bS1 (556 aa).

S1 motif domains lie at 35–105 (TIKE…ISQQ), 120–183 (NAII…ISRK), 204–272 (TEPV…LSIK), 289–359 (GYAI…VSLK), 377–444 (DVLE…LSAK), and 461–525 (DSVI…ASVH).

It belongs to the bacterial ribosomal protein bS1 family.

Functionally, binds mRNA; thus facilitating recognition of the initiation point. It is needed to translate mRNA with a short Shine-Dalgarno (SD) purine-rich sequence. This chain is Small ribosomal subunit protein bS1 (rpsA), found in Helicobacter pylori (strain ATCC 700392 / 26695) (Campylobacter pylori).